The following is a 482-amino-acid chain: Mannose-1-phosphate guanylyltransferase 2 (482 aa).

Belongs to the mannose-6-phosphate isomerase type 2 family.

It carries out the reaction alpha-D-mannose 1-phosphate + GTP + H(+) = GDP-alpha-D-mannose + diphosphate. Its pathway is nucleotide-sugar biosynthesis; GDP-alpha-D-mannose biosynthesis; GDP-alpha-D-mannose from alpha-D-mannose 1-phosphate (GTP route): step 1/1. Its function is as follows. Involved in GDP-mannose biosynthesis which serves as the activated sugar nucleotide precursor for mannose residues in cell surface polysaccharides. This enzyme participates in synthesis of the LPS O antigen. In Escherichia coli O157:H7, this protein is Mannose-1-phosphate guanylyltransferase 2 (manC2).